The sequence spans 330 residues: Phenylalanine--tRNA ligase alpha subunit (330 aa).

Glu255 serves as a coordination point for Mg(2+).

This sequence belongs to the class-II aminoacyl-tRNA synthetase family. Phe-tRNA synthetase alpha subunit type 1 subfamily. Tetramer of two alpha and two beta subunits. Mg(2+) serves as cofactor.

The protein resides in the cytoplasm. It carries out the reaction tRNA(Phe) + L-phenylalanine + ATP = L-phenylalanyl-tRNA(Phe) + AMP + diphosphate + H(+). This Acinetobacter baumannii (strain AYE) protein is Phenylalanine--tRNA ligase alpha subunit.